The primary structure comprises 548 residues: Probable delta-1-pyrroline-5-carboxylate dehydrogenase (548 aa).

The Proton acceptor role is filled by Glu-298. Cys-332 acts as the Nucleophile in catalysis. 3 positions are modified to phosphoserine: Ser-391, Ser-394, and Ser-396.

It belongs to the aldehyde dehydrogenase family.

It catalyses the reaction L-glutamate 5-semialdehyde + NAD(+) + H2O = L-glutamate + NADH + 2 H(+). Its pathway is amino-acid degradation; L-proline degradation into L-glutamate; L-glutamate from L-proline: step 2/2. This chain is Probable delta-1-pyrroline-5-carboxylate dehydrogenase, found in Schizosaccharomyces pombe (strain 972 / ATCC 24843) (Fission yeast).